We begin with the raw amino-acid sequence, 269 residues long: MKKYIISLIVFLSFYAQADLTDFRVATWNLQGASATTESKWNINVRQLISGENAVDILAVQEAGSPPSTAVDTGTLIPSPGIPVRELIWNLSTNSRPQQVYIYFSAVDALGGRVNLALVSNRRADEVFVLSPVRQGGRPLLGIRIGNDAFFTAHAIAMRNNDAPALVEEVYNFFRDSRDPVHQALNWMILGDFNREPADLEMNLTVPVRRASEIISPAAATQTSQRTLDYAVAGNSVAFRPSPLQAGIVYGARRTQISSDHFPVGVSRR.

Positions 1 to 18 (MKKYIISLIVFLSFYAQA) are cleaved as a signal peptide. A Nuclear localization signal motif is present at residues 195 to 210 (REPADLEMNLTVPVRR).

In terms of assembly, heterotrimer of 3 subunits, CdtA, CdtB and CdtC.

The protein localises to the secreted. Part of the tripartite complex that is required for the CDT activity. CdtB exhibits a DNA-nicking endonuclease activity, and very probably causes DNA damage in intoxicated cells. This damage induces G2/M cell cycle arrest, chromatin fragmentation, cell distention and nucleus enlargement. This Escherichia coli protein is Cytolethal distending toxin subunit B (cdtB).